The following is a 285-amino-acid chain: Putative pyruvate, phosphate dikinase regulatory protein (285 aa).

165 to 172 (GVSRTSKT) lines the ADP pocket.

The protein belongs to the pyruvate, phosphate/water dikinase regulatory protein family. PDRP subfamily.

The catalysed reaction is N(tele)-phospho-L-histidyl/L-threonyl-[pyruvate, phosphate dikinase] + ADP = N(tele)-phospho-L-histidyl/O-phospho-L-threonyl-[pyruvate, phosphate dikinase] + AMP + H(+). The enzyme catalyses N(tele)-phospho-L-histidyl/O-phospho-L-threonyl-[pyruvate, phosphate dikinase] + phosphate + H(+) = N(tele)-phospho-L-histidyl/L-threonyl-[pyruvate, phosphate dikinase] + diphosphate. Its function is as follows. Bifunctional serine/threonine kinase and phosphorylase involved in the regulation of the pyruvate, phosphate dikinase (PPDK) by catalyzing its phosphorylation/dephosphorylation. The polypeptide is Putative pyruvate, phosphate dikinase regulatory protein (Lactobacillus delbrueckii subsp. bulgaricus (strain ATCC BAA-365 / Lb-18)).